Consider the following 143-residue polypeptide: Transcriptional regulator MraZ (143 aa).

SpoVT-AbrB domains follow at residues 5 to 47 (EYEH…TLEE) and 76 to 119 (AIEV…DRET).

Belongs to the MraZ family. In terms of assembly, forms oligomers.

Its subcellular location is the cytoplasm. The protein resides in the nucleoid. This Staphylococcus haemolyticus (strain JCSC1435) protein is Transcriptional regulator MraZ.